A 484-amino-acid polypeptide reads, in one-letter code: D-aminoacylase (484 aa).

This sequence belongs to the metallo-dependent hydrolases superfamily. N-acyl-D-amino-acid deacylase family. Zn(2+) is required as a cofactor.

The protein resides in the cytoplasm. The catalysed reaction is an N-acyl-D-amino acid + H2O = a D-alpha-amino acid + a carboxylate. Its function is as follows. Has a wide specificity; hydrolyzes N-acyl derivative of neutral D-amino acids. The sequence is that of D-aminoacylase (dan) from Alcaligenes xylosoxydans xylosoxydans (Achromobacter xylosoxidans).